The following is a 503-amino-acid chain: ATP synthase subunit alpha (503 aa).

Residue 170-177 participates in ATP binding; that stretch reads GDKQTGKT.

This sequence belongs to the ATPase alpha/beta chains family. In terms of assembly, F-type ATPases have 2 components, CF(1) - the catalytic core - and CF(0) - the membrane proton channel. CF(1) has five subunits: alpha(3), beta(3), gamma(1), delta(1), epsilon(1). CF(0) has three main subunits: a(1), b(2) and c(9-12). The alpha and beta chains form an alternating ring which encloses part of the gamma chain. CF(1) is attached to CF(0) by a central stalk formed by the gamma and epsilon chains, while a peripheral stalk is formed by the delta and b chains.

The protein localises to the cell inner membrane. It catalyses the reaction ATP + H2O + 4 H(+)(in) = ADP + phosphate + 5 H(+)(out). Functionally, produces ATP from ADP in the presence of a proton gradient across the membrane. The alpha chain is a regulatory subunit. This chain is ATP synthase subunit alpha, found in Helicobacter pylori (strain G27).